Reading from the N-terminus, the 386-residue chain is Threonine--tRNA ligase editing subunit (386 aa).

This sequence belongs to the class-II aminoacyl-tRNA synthetase family. Archaea-specific ThrRS editing domain subfamily. As to quaternary structure, probably interacts with its catalytic subunit (AC Q97VW8); a subunit fusion (in the order edit-catalytic) is fully functional.

The protein resides in the cytoplasm. Its function is as follows. Freestanding tRNA editing subunit of threonine--tRNA ligase, the catalytic subunit is AC Q97VW8. Deacylates (edits) mischarged L-seryl-tRNA(Thr) in trans, removing L-serine, has no aminoacylation activity. In vitro when both subunits are present, or if the 2 subunits are fused, L-seryl-tRNA(Thr) is no longer produced. Has no activity on correctly acylated L-seryl-tRNA(Ser) or L-threonyl-tRNA(Thr). Editing is probably catalyzed by the 2'-OH of A76 of tRNA(Thr). This Saccharolobus solfataricus (strain ATCC 35092 / DSM 1617 / JCM 11322 / P2) (Sulfolobus solfataricus) protein is Threonine--tRNA ligase editing subunit.